We begin with the raw amino-acid sequence, 399 residues long: La protein 2 (399 aa).

Residues 3–106 (SSFNEETAKK…GRGTKLSKPE (104 aa)) enclose the HTH La-type RNA-binding domain. One can recognise an RRM domain in the interval 115–192 (RTLAASPFEY…ADLVLIPKSD (78 aa)). One can recognise a xRRM domain in the interval 269-399 (SLCKDNTDQL…QPTKKARKEP (131 aa)). The tract at residues 367–399 (AELEGGKEGHKKEKGKDECFENVQPTKKARKEP) is disordered. Basic and acidic residues predominate over residues 370 to 385 (EGGKEGHKKEKGKDEC).

In terms of tissue distribution, expressed ubiquitously (at protein level).

Its subcellular location is the nucleus. The protein localises to the nucleoplasm. It localises to the nucleolus. Its function is as follows. Binds to the 3' poly(U) terminus of nascent RNA polymerase III transcripts, protecting them from exonuclease digestion and facilitating their folding and maturation. In Arabidopsis thaliana (Mouse-ear cress), this protein is La protein 2 (LA2).